The sequence spans 258 residues: 2S seed storage albumin protein (258 aa).

The N-terminal stretch at 1 to 24 is a signal peptide; it reads MAKLIPTIALVSVLLFIIANASFA. The propeptide occupies 25 to 35; that stretch reads YRTTITTIEID. Disulfide bonds link Cys49-Cys108, Cys61-Cys97, Cys98-Cys145, and Cys110-Cys149. A disordered region spans residues 64-87; the sequence is YLRQSSSRRSPGEEVLRMPGDENQ. Ser69 carries the post-translational modification Phosphoserine. Basic and acidic residues predominate over residues 73-83; it reads SPGEEVLRMPG. A propeptide spanning residues 77-86 is cleaved from the precursor; it reads EVLRMPGDEN. Gln87 is modified (pyrrolidone carboxylic acid). 2 propeptides span residues 154-156 and 191-193; these read RTN and SDN. Disulfide bonds link Cys162/Cys212, Cys175/Cys201, Cys202/Cys249, and Cys214/Cys256. The residue at position 194 (Gln194) is a Pyrrolidone carboxylic acid.

This sequence belongs to the 2S seed storage albumins family. As to quaternary structure, the 2 mature proteins consist of heterodimers of a small and a large chain; disulfide-linked. In terms of processing, the N-terminus of both large chains is blocked. Post-translationally, the C-terminus of the allergen Ric c 1 and allergen Ric c 3 small chains are heterogeneous and the length of the chains can vary from 33 to 36 amino acids and from 36 to 40 amino acids respectively.

In terms of biological role, 2S seed storage proteins. The polypeptide is 2S seed storage albumin protein (Ricinus communis (Castor bean)).